We begin with the raw amino-acid sequence, 117 residues long: Ribosome-binding factor A (117 aa).

The protein belongs to the RbfA family. In terms of assembly, monomer. Binds 30S ribosomal subunits, but not 50S ribosomal subunits or 70S ribosomes.

The protein resides in the cytoplasm. One of several proteins that assist in the late maturation steps of the functional core of the 30S ribosomal subunit. Associates with free 30S ribosomal subunits (but not with 30S subunits that are part of 70S ribosomes or polysomes). Required for efficient processing of 16S rRNA. May interact with the 5'-terminal helix region of 16S rRNA. The polypeptide is Ribosome-binding factor A (Leuconostoc mesenteroides subsp. mesenteroides (strain ATCC 8293 / DSM 20343 / BCRC 11652 / CCM 1803 / JCM 6124 / NCDO 523 / NBRC 100496 / NCIMB 8023 / NCTC 12954 / NRRL B-1118 / 37Y)).